We begin with the raw amino-acid sequence, 180 residues long: MEQFHATTIFAIHHNGKAAMAGDGQVTFGNAVVMKHTAKKVRRLFQGKVLAGFAGSVADAFTLFEMFEGKLEEFNGNLPRAAVELAKEWRSDKVLRRLEAMLIVMDERHLLLVSGTGEVIEPDDGILAIGSGGNYALAAGRALKQYAGDQLSAKEIAKAALEIAANICVYTNDHIIVEEL.

The active site involves Thr7. Ala165, Cys168, and Thr171 together coordinate Na(+).

The protein belongs to the peptidase T1B family. HslV subfamily. A double ring-shaped homohexamer of HslV is capped on each side by a ring-shaped HslU homohexamer. The assembly of the HslU/HslV complex is dependent on binding of ATP.

The protein resides in the cytoplasm. It catalyses the reaction ATP-dependent cleavage of peptide bonds with broad specificity.. Its activity is regulated as follows. Allosterically activated by HslU binding. Its function is as follows. Protease subunit of a proteasome-like degradation complex believed to be a general protein degrading machinery. In Geobacillus sp. (strain WCH70), this protein is ATP-dependent protease subunit HslV.